The sequence spans 285 residues: Small ribosomal subunit protein uS2 (285 aa).

The segment at 229 to 285 is disordered; the sequence is RHNGKSNAAEEPMAEWERELLEQHEEQKSQDAAPAEQSAPAAEAPAETEQKDAPAAE. Basic and acidic residues predominate over residues 243–257; sequence EWERELLEQHEEQKS. Residues 260 to 275 show a composition bias toward low complexity; that stretch reads AAPAEQSAPAAEAPAE. Basic and acidic residues predominate over residues 276-285; that stretch reads TEQKDAPAAE.

The protein belongs to the universal ribosomal protein uS2 family.

The chain is Small ribosomal subunit protein uS2 from Kocuria rhizophila (strain ATCC 9341 / DSM 348 / NBRC 103217 / DC2201).